A 131-amino-acid chain; its full sequence is MSWQTYVDDHLMCDIDGHRLTAAAIIGHDGSVWAQSSGFPQFKSDEVAAVMKDFDEPGSLAPTGLHLGGTKYMVIQGEPGAVIRGKKGSGGITVKKTGQALIIGIYDEPLTPGQCNMIVERLGDYLLEQGM.

The protein belongs to the profilin family. As to quaternary structure, occurs in many kinds of cells as a complex with monomeric actin in a 1:1 ratio.

The protein resides in the cytoplasm. The protein localises to the cytoskeleton. In terms of biological role, binds to actin and affects the structure of the cytoskeleton. At high concentrations, profilin prevents the polymerization of actin, whereas it enhances it at low concentrations. By binding to PIP2, it inhibits the formation of IP3 and DG. This Hevea brasiliensis (Para rubber tree) protein is Profilin-5.